Consider the following 107-residue polypeptide: UPF0122 protein BLi01817/BL02321 (107 aa).

This sequence belongs to the UPF0122 family.

In terms of biological role, might take part in the signal recognition particle (SRP) pathway. This is inferred from the conservation of its genetic proximity to ftsY/ffh. May be a regulatory protein. The polypeptide is UPF0122 protein BLi01817/BL02321 (Bacillus licheniformis (strain ATCC 14580 / DSM 13 / JCM 2505 / CCUG 7422 / NBRC 12200 / NCIMB 9375 / NCTC 10341 / NRRL NRS-1264 / Gibson 46)).